We begin with the raw amino-acid sequence, 159 residues long: uncharacterized protein (159 aa).

Helical transmembrane passes span 22–42 (LFSS…SFTI), 45–65 (PIEY…LLTL), 80–100 (IWVS…SLSL), and 104–124 (FPSL…CLAF).

It is found in the membrane. This is an uncharacterized protein from Schizosaccharomyces pombe (strain 972 / ATCC 24843) (Fission yeast).